A 139-amino-acid polypeptide reads, in one-letter code: Nucleoside diphosphate kinase (139 aa).

ATP is bound by residues K10, F58, R86, T92, R104, and N114. The active-site Pros-phosphohistidine intermediate is the H117.

This sequence belongs to the NDK family. In terms of assembly, homotetramer. It depends on Mg(2+) as a cofactor.

It is found in the cytoplasm. It carries out the reaction a 2'-deoxyribonucleoside 5'-diphosphate + ATP = a 2'-deoxyribonucleoside 5'-triphosphate + ADP. It catalyses the reaction a ribonucleoside 5'-diphosphate + ATP = a ribonucleoside 5'-triphosphate + ADP. In terms of biological role, major role in the synthesis of nucleoside triphosphates other than ATP. The ATP gamma phosphate is transferred to the NDP beta phosphate via a ping-pong mechanism, using a phosphorylated active-site intermediate. This chain is Nucleoside diphosphate kinase, found in Nocardia farcinica (strain IFM 10152).